We begin with the raw amino-acid sequence, 152 residues long: MFDVAPSELLLVAVVALVVIGPKDLPRAMRVVGRWLGKARKLSRHFRSGIDEMIRQSEMEDMEKRWAEENAKLLAENQGQGNQTASTSSPATPSPVSDDPAEQNIVFTSPADLEVNTADTSHLAANHTETTATTAASTPAKPKEADQQEKQS.

Residues 1 to 21 traverse the membrane as a helical segment; that stretch reads MFDVAPSELLLVAVVALVVIG. Basic and acidic residues predominate over residues 60–71; it reads EDMEKRWAEENA. A disordered region spans residues 60 to 152; it reads EDMEKRWAEE…KEADQQEKQS (93 aa). Composition is skewed to low complexity over residues 84–98 and 124–140; these read TASTSSPATPSPVSD and AANHTETTATTAASTPA. The segment covering 141-152 has biased composition (basic and acidic residues); sequence KPKEADQQEKQS.

Belongs to the TatB family. In terms of assembly, the Tat system comprises two distinct complexes: a TatABC complex, containing multiple copies of TatA, TatB and TatC subunits, and a separate TatA complex, containing only TatA subunits. Substrates initially bind to the TatABC complex, which probably triggers association of the separate TatA complex to form the active translocon.

The protein resides in the cell inner membrane. In terms of biological role, part of the twin-arginine translocation (Tat) system that transports large folded proteins containing a characteristic twin-arginine motif in their signal peptide across membranes. Together with TatC, TatB is part of a receptor directly interacting with Tat signal peptides. TatB may form an oligomeric binding site that transiently accommodates folded Tat precursor proteins before their translocation. This is Sec-independent protein translocase protein TatB from Zymomonas mobilis subsp. mobilis (strain ATCC 31821 / ZM4 / CP4).